The primary structure comprises 1183 residues: DNA-directed RNA polymerase subunit beta (1183 aa).

The protein belongs to the RNA polymerase beta chain family. As to quaternary structure, the RNAP catalytic core consists of 2 alpha, 1 beta, 1 beta' and 1 omega subunit. When a sigma factor is associated with the core the holoenzyme is formed, which can initiate transcription.

It catalyses the reaction RNA(n) + a ribonucleoside 5'-triphosphate = RNA(n+1) + diphosphate. Functionally, DNA-dependent RNA polymerase catalyzes the transcription of DNA into RNA using the four ribonucleoside triphosphates as substrates. The sequence is that of DNA-directed RNA polymerase subunit beta from Staphylococcus aureus (strain Mu50 / ATCC 700699).